Reading from the N-terminus, the 163-residue chain is Secreted RxLR effector protein 135 (163 aa).

Residues 1–20 form the signal peptide; that stretch reads MRRLYLFVLILATFLTTSHG. The RxLR-dEER signature appears at 33–45; it reads RGLQEEAGEDEER. The segment at 94–127 is disordered; the sequence is KNAGKPKRQTPQIAATGPAKPKVQSPEEAAAVPG.

This sequence belongs to the RxLR effector family.

It localises to the secreted. The protein resides in the host nucleus. It is found in the host cytoplasm. Its function is as follows. Secreted effector that completely suppresses the host cell death induced by cell death-inducing proteins. This is Secreted RxLR effector protein 135 from Plasmopara viticola (Downy mildew of grapevine).